We begin with the raw amino-acid sequence, 675 residues long: Putative methyl-accepting chemotaxis AlkN (675 aa).

The next 2 membrane-spanning stretches (helical) occupy residues 24-44 and 303-323; these read IALY…FLLS and FPSV…FFII. Residues 343-394 form the HAMP domain; it reads QRNQAAILRLLDELGDLADGDLTVQATVTEDFTGAIADSINYSIDQLRNLVQ. The region spanning 399–635 is the Methyl-accepting transducer domain; sequence SAVQVASAAQ…HISNTMNVIQ (237 aa).

This sequence belongs to the methyl-accepting chemotaxis (MCP) protein family.

The protein resides in the membrane. It participates in hydrocarbon metabolism; alkane degradation. Functionally, chemotactic-signal transducers respond to changes in the concentration of attractants and repellents in the environment, transduce a signal from the outside to the inside of the cell, and facilitate sensory adaptation through the variation of the level of methylation. The polypeptide is Putative methyl-accepting chemotaxis AlkN (Alcanivorax borkumensis (strain ATCC 700651 / DSM 11573 / NCIMB 13689 / SK2)).